The following is a 447-amino-acid chain: GTPase Der (447 aa).

EngA-type G domains are found at residues 3–167 and 181–354; these read PVIA…VQER and VKIA…AAAM. Residues 9–16, 56–60, 119–122, 187–194, 234–238, and 299–302 contribute to the GTP site; these read GRPNVGKS, DTGGF, NKAE, DTAGL, and NKWD. One can recognise a KH-like domain in the interval 355–439; sequence IKLPTPQITR…PLRIEFRTNK (85 aa).

Belongs to the TRAFAC class TrmE-Era-EngA-EngB-Septin-like GTPase superfamily. EngA (Der) GTPase family. As to quaternary structure, associates with the 50S ribosomal subunit.

In terms of biological role, GTPase that plays an essential role in the late steps of ribosome biogenesis. The polypeptide is GTPase Der (Cupriavidus metallidurans (strain ATCC 43123 / DSM 2839 / NBRC 102507 / CH34) (Ralstonia metallidurans)).